Here is a 130-residue protein sequence, read N- to C-terminus: MYSAVTRGIEVTVEPFYLEVQSEPEENRYVWGYRVTIVNNSSETVQLCSRYWQITDANGHVQEVRGSGVVGEQPVLDPGDSYQYSSGCPLTTSSGVMVGRYQMKGEDGAQFEIEIPAFSLDVPEQRRTLN.

The 125-residue stretch at 3-127 folds into the ApaG domain; the sequence is SAVTRGIEVT…FSLDVPEQRR (125 aa).

This Brucella canis (strain ATCC 23365 / NCTC 10854 / RM-666) protein is Protein ApaG.